A 752-amino-acid polypeptide reads, in one-letter code: Pentatricopeptide repeat-containing protein At5g13270, chloroplastic (752 aa).

The transit peptide at 1-80 directs the protein to the chloroplast; that stretch reads MTILTVQSSF…LQEMDKAGVS (80 aa). PPR repeat units follow at residues 47–81, 82–116, 117–147, 148–182, 183–217, 218–248, 249–283, 284–318, 319–349, 350–384, 386–420, 421–451, 452–486, 487–522, and 523–553; these read QGQVENLHLVSLSKHRKLNEAFEFLQEMDKAGVSV, SSYSYQCLFEACRELRSLSHGRLLHDRMRMGIENP, SVLLQNCVLQMYCECRSLEDADKLFDEMSEL, NAVSRTTMISAYAEQGILDKAVGLFSGMLASGDKP, PSSMYTTLLKSLVNPRALDFGRQIHAHVIRAGLCS, NTSIETGIVNMYVKCGWLVGAKRVFDQMAVK, KPVACTGLMVGYTQAGRARDALKLFVDLVTEGVEW, DSFVFSVVLKACASLEELNLGKQIHACVAKLGLES, EVSVGTPLVDFYIKCSSFESACRAFQEIREP, NDVSWSAIISGYCQMSQFEEAVKTFKSLRSKNASI, NSFTYTSIFQACSVLADCNIGGQVHADAIKRSLIG, SQYGESALITMYSKCGCLDDANEVFESMDNP, DIVAWTAFISGHAYYGNASEALRLFEKMVSCGMKP, NSVTFIAVLTACSHAGLVEQGKHCLDTMLRKYNVAP, and TIDHYDCMIDIYARSGLLDEALKFMKNMPFE. Positions 558–633 are type E motif; it reads SWKCFLSGCW…ELSCSWIQEK (76 aa). The segment at 634–664 is type E(+) motif; that stretch reads GKIHRFIVGDKHHPQTQEIYEKLKEFDGFME. Positions 665–752 are type DYW motif; that stretch reads GDMFQCNMTE…EGKCSCNDYW (88 aa).

The protein belongs to the PPR family. PCMP-H subfamily.

It localises to the plastid. The protein resides in the chloroplast. This chain is Pentatricopeptide repeat-containing protein At5g13270, chloroplastic (PCMP-H90), found in Arabidopsis thaliana (Mouse-ear cress).